A 108-amino-acid polypeptide reads, in one-letter code: Thioredoxin (108 aa).

Residues 2–108 (NKIIELTDQN…LKEFLDENIN (107 aa)) enclose the Thioredoxin domain. Cysteine 32 and cysteine 35 are disulfide-bonded.

The protein belongs to the thioredoxin family.

Functionally, participates in various redox reactions through the reversible oxidation of its active center dithiol to a disulfide and catalyzes dithiol-disulfide exchange reactions. The chain is Thioredoxin (trxA) from Buchnera aphidicola subsp. Acyrthosiphon pisum (strain APS) (Acyrthosiphon pisum symbiotic bacterium).